We begin with the raw amino-acid sequence, 237 residues long: Myb-related protein MYBAS1 (237 aa).

HTH myb-type domains lie at 5-57 (REEM…VNYL) and 58-112 (HPGL…RKKA). Residues 33–57 (WDFVAKVSGLNRTGKSCRLRWVNYL) constitute a DNA-binding region (H-T-H motif). The Bipartite nuclear localization signal 1 motif lies at 62–65 (KHGR). The H-T-H motif DNA-binding region spans 85 to 108 (WSRIARRLPGRTDNEIKNYWRTHM). Residues 109-117 (RKKAQERRG) carry the Bipartite nuclear localization signal 2 motif.

The protein localises to the nucleus. In terms of biological role, transcription factor. The polypeptide is Myb-related protein MYBAS1 (MYBAS1) (Oryza sativa subsp. japonica (Rice)).